Here is a 715-residue protein sequence, read N- to C-terminus: Myosin light chain kinase 3 (715 aa).

Positions valine 67–proline 114 are disordered. Positions valine 404–leucine 659 constitute a Protein kinase domain. Residues leucine 410–valine 418 and lysine 433 each bind ATP. The active-site Proton acceptor is aspartate 525.

This sequence belongs to the protein kinase superfamily. CAMK Ser/Thr protein kinase family. It depends on Mg(2+) as a cofactor. Phosphorylated on serine residues.

It localises to the cytoplasm. It carries out the reaction L-seryl-[myosin light chain] + ATP = O-phospho-L-seryl-[myosin light chain] + ADP + H(+). The enzyme catalyses L-threonyl-[myosin light chain] + ATP = O-phospho-L-threonyl-[myosin light chain] + ADP + H(+). Its function is as follows. Kinase that phosphorylates MYL2 in vitro. Increases cardiomyocyte contractility. Required for sarcomere formation in the developing heart. In Danio rerio (Zebrafish), this protein is Myosin light chain kinase 3 (mylk3).